The primary structure comprises 62 residues: Conotoxin Im5.1 (62 aa).

The first 19 residues, Met-1–Ser-19, serve as a signal peptide directing secretion. A propeptide spanning residues Thr-20 to Asn-48 is cleaved from the precursor. Trp-60 carries the tryptophan amide modification.

This sequence belongs to the conotoxin T superfamily. Contains 2 disulfide bonds that can be either 'C1-C3, C2-C4' or 'C1-C4, C2-C3', since these disulfide connectivities have been observed for conotoxins with cysteine framework V (for examples, see AC P0DQQ7 and AC P81755). In terms of tissue distribution, expressed by the venom duct.

The protein resides in the secreted. The sequence is that of Conotoxin Im5.1 from Conus imperialis (Imperial cone).